The sequence spans 260 residues: Adenosylcobinamide-GDP ribazoletransferase (260 aa).

Helical transmembrane passes span 42–62 (PLAGGILGLLAGVALLIANAI), 64–84 (LPPLAAALIAIGALAAMTGAL), 117–137 (FAALTLVIWTSVKASLLMAII), 144–164 (YALLALIGTEAASRAGMLAFW), 192–212 (GLGLALLAIGFLPSGGMVALI), 214–234 (ALVLMTVVLFGFARLCMAKIG), and 240–260 (TLGAAQQIGSLAALIGLVMAL).

This sequence belongs to the CobS family. Mg(2+) is required as a cofactor.

It localises to the cell inner membrane. It carries out the reaction alpha-ribazole + adenosylcob(III)inamide-GDP = adenosylcob(III)alamin + GMP + H(+). It catalyses the reaction alpha-ribazole 5'-phosphate + adenosylcob(III)inamide-GDP = adenosylcob(III)alamin 5'-phosphate + GMP + H(+). It functions in the pathway cofactor biosynthesis; adenosylcobalamin biosynthesis; adenosylcobalamin from cob(II)yrinate a,c-diamide: step 7/7. Functionally, joins adenosylcobinamide-GDP and alpha-ribazole to generate adenosylcobalamin (Ado-cobalamin). Also synthesizes adenosylcobalamin 5'-phosphate from adenosylcobinamide-GDP and alpha-ribazole 5'-phosphate. This chain is Adenosylcobinamide-GDP ribazoletransferase, found in Brucella ovis (strain ATCC 25840 / 63/290 / NCTC 10512).